The sequence spans 78 residues: uncharacterized protein (78 aa).

The next 2 helical transmembrane spans lie at 5 to 24 and 39 to 61; these read LALLILVIPGAISALGIKLM and LWLQGLSGFIFFAIGLYVLAGFI.

It localises to the cell membrane. This is an uncharacterized protein from Bacillus subtilis (strain 168).